We begin with the raw amino-acid sequence, 120 residues long: Small ribosomal subunit protein uS13 (120 aa).

The disordered stretch occupies residues 92 to 120 (RRGLPCRGQRTRTNARTRKGPRKPIAGKK).

It belongs to the universal ribosomal protein uS13 family. Part of the 30S ribosomal subunit. Forms a loose heterodimer with protein S19. Forms two bridges to the 50S subunit in the 70S ribosome.

Its function is as follows. Located at the top of the head of the 30S subunit, it contacts several helices of the 16S rRNA. In the 70S ribosome it contacts the 23S rRNA (bridge B1a) and protein L5 of the 50S subunit (bridge B1b), connecting the 2 subunits; these bridges are implicated in subunit movement. Contacts the tRNAs in the A and P-sites. This Laribacter hongkongensis (strain HLHK9) protein is Small ribosomal subunit protein uS13.